The chain runs to 360 residues: Peptide chain release factor 1 (360 aa).

The residue at position 235 (Gln-235) is an N5-methylglutamine. The disordered stretch occupies residues 284 to 313 (AKRQQAEASTRRNLLGSGDRSDRNRTYNFP).

This sequence belongs to the prokaryotic/mitochondrial release factor family. Post-translationally, methylated by PrmC. Methylation increases the termination efficiency of RF1.

Its subcellular location is the cytoplasm. Peptide chain release factor 1 directs the termination of translation in response to the peptide chain termination codons UAG and UAA. This Escherichia coli O127:H6 (strain E2348/69 / EPEC) protein is Peptide chain release factor 1.